The following is a 95-amino-acid chain: Large ribosomal subunit protein uL23 (95 aa).

The protein belongs to the universal ribosomal protein uL23 family. In terms of assembly, part of the 50S ribosomal subunit. Contacts protein L29, and trigger factor when it is bound to the ribosome.

Its function is as follows. One of the early assembly proteins it binds 23S rRNA. One of the proteins that surrounds the polypeptide exit tunnel on the outside of the ribosome. Forms the main docking site for trigger factor binding to the ribosome. This Syntrophotalea carbinolica (strain DSM 2380 / NBRC 103641 / GraBd1) (Pelobacter carbinolicus) protein is Large ribosomal subunit protein uL23.